Here is a 344-residue protein sequence, read N- to C-terminus: Glycerol-3-phosphate dehydrogenase [NAD(P)+] (344 aa).

Residues tryptophan 11, arginine 31, arginine 32, and lysine 105 each coordinate NADPH. Sn-glycerol 3-phosphate-binding residues include lysine 105, glycine 133, and serine 135. Alanine 137 contributes to the NADPH binding site. Positions 188, 241, 251, 252, and 253 each coordinate sn-glycerol 3-phosphate. The active-site Proton acceptor is lysine 188. Position 252 (arginine 252) interacts with NADPH. Glutamate 278 contacts NADPH.

Belongs to the NAD-dependent glycerol-3-phosphate dehydrogenase family.

Its subcellular location is the cytoplasm. The catalysed reaction is sn-glycerol 3-phosphate + NAD(+) = dihydroxyacetone phosphate + NADH + H(+). The enzyme catalyses sn-glycerol 3-phosphate + NADP(+) = dihydroxyacetone phosphate + NADPH + H(+). The protein operates within membrane lipid metabolism; glycerophospholipid metabolism. In terms of biological role, catalyzes the reduction of the glycolytic intermediate dihydroxyacetone phosphate (DHAP) to sn-glycerol 3-phosphate (G3P), the key precursor for phospholipid synthesis. This is Glycerol-3-phosphate dehydrogenase [NAD(P)+] from Acidithiobacillus ferrooxidans (strain ATCC 23270 / DSM 14882 / CIP 104768 / NCIMB 8455) (Ferrobacillus ferrooxidans (strain ATCC 23270)).